The chain runs to 344 residues: Follistatin (344 aa).

The N-terminal stretch at 1 to 29 (MVCARHQPGGLCLLLLLLCQFMEDRSAQA) is a signal peptide. The TB domain maps to 30 to 103 (GNCWLRQAKN…TCENVDCGPG (74 aa)). Disulfide bonds link Cys-32–Cys-55, Cys-42–Cys-88, Cys-56–Cys-91, Cys-95–Cys-106, Cys-100–Cys-116, Cys-118–Cys-150, Cys-122–Cys-143, Cys-132–Cys-164, Cys-168–Cys-179, Cys-173–Cys-189, Cys-192–Cys-225, Cys-196–Cys-218, Cys-207–Cys-239, Cys-245–Cys-256, Cys-250–Cys-267, Cys-270–Cys-302, Cys-274–Cys-295, and Cys-284–Cys-316. In terms of domain architecture, Follistatin-like 1 spans 94–117 (TCENVDCGPGKKCRMNKKNKPRCV). The Kazal-like 1 domain maps to 112-166 (NKPRCVCAPDCSNITWKGPVCGLDGKTYRNECALLKARCKEQPELEVQYQGKCKK). The N-linked (GlcNAc...) asparagine glycan is linked to Asn-124. One can recognise a Follistatin-like 2 domain in the interval 167-190 (TCRDVFCPGSSTCVVDQTNNAYCV). The 56-residue stretch at 186–241 (NAYCVTCNRICPEPSSSEQSLCGNDGVTYSSACHLRKATCLLGRSIGLAYEGKCIK) folds into the Kazal-like 2 domain. Residues 244-268 (SCEDIQCGGGKKCLWDFKVGRGRCS) form the Follistatin-like 3 domain. One can recognise a Kazal-like 3 domain in the interval 264-318 (RGRCSLCDELCPDSKSDEPVCASDNATYASECAMKEAACSSGVLLEVKHSGSCNS). A glycan (N-linked (GlcNAc...) asparagine) is linked at Asn-288. A disordered region spans residues 315 to 344 (SCNSISEETEEEEEEEDQDYSFPISSTLEW). Residues 321–333 (EETEEEEEEEDQD) show a composition bias toward acidic residues.

Interacts with GDF11. Interacts with activin A/INHBA. Interacts with myostatin/MSTN.

Its subcellular location is the secreted. It localises to the nucleus. The protein resides in the nucleolus. Functionally, multifunctional regulatory protein whose primary function is to antagonize members of the transforming growth factor beta (TGF-beta) superfamily including activin, myostatin, GDF11 or bone morphogenetic proteins (BMPs). Mechanistically, binds to these ligands in the extracellular space, blocking their type II receptor-binding site to inhibit downstream signaling. Plays an essential role in muscle fiber formation and growth both by preventing the repressive effects of myostatin and through SMAD3/AKT/mTOR signaling independently of myostatin. Also promotes neural differentiation by antagonizing the action BMP4. Acts as a specific inhibitor of the biosynthesis and secretion of pituitary follicle stimulating hormone (FSH) by sequestering activin A/INHBA. On the other hand, translocates into the nucleus where it down-regulates rRNA synthesis and ribosome biogenesis to maintain cellular energy homeostasis by binding to rDNA. The chain is Follistatin from Rattus norvegicus (Rat).